The sequence spans 664 residues: Putative membrane protein Bcell_0381 (664 aa).

Acidic residues predominate over residues 588 to 616 (DVTQDENGEEKSEEDNKEEIVEENTEEDN). The disordered stretch occupies residues 588–622 (DVTQDENGEEKSEEDNKEEIVEENTEEDNKEEKTI). A helical transmembrane segment spans residues 636 to 656 (YQFLLAGIIMLVGGSCIYVFY).

It localises to the cell membrane. The sequence is that of Putative membrane protein Bcell_0381 from Evansella cellulosilytica (strain ATCC 21833 / DSM 2522 / FERM P-1141 / JCM 9156 / N-4) (Bacillus cellulosilyticus).